The primary structure comprises 511 residues: MEKFEGYSEKHKSRQQYFVYPLLFQEYIYAFAHDYGLNDSEPVEIVSRNNKKFSSLLVKRLIIRMYQQNFGINLVNHPNQDRLLDYKIGFYSEFYSQILSEGFAIVVEIPFSLRELPCPKEKEIPKFQNLRSIHSIFPFLEDTFLHLDYLSHIEIPYPIHLEILVQLLQYRIQDVPSLHLLRFFLNYYSNWNSFITSMKSIFIFKKENKRLFRFLYNSYLSEYEFFLLFLRKQSSCLPLASSGTFLERIHFSRKMEHFGIMYPGFFRKTIWFFMDPLMHYVRYQGKAIFASKGTLFFNKKWKWYLIHLWQYFFSFWTQPRRIHLNQLANSCFDFMGYLSSVPKSPLLVRNQMLENSFLIDTRMPKFDTIVPVTALIGYLSKAQFCTGSGHPISKPIWTDLSDWDILDRFGRICRNLFHYHSGSSKKRTLYRLKYILRLSCARTLARKHKSTVRTFMQRLGSAFLEEFFTEEELVFSLMFTKTTLFSFCGSHSERIWYFDIIRINDLVKPLN.

Belongs to the intron maturase 2 family. MatK subfamily.

The protein localises to the plastid. The protein resides in the chloroplast. Its function is as follows. Usually encoded in the trnK tRNA gene intron. Probably assists in splicing its own and other chloroplast group II introns. This Poa pratensis (Kentucky bluegrass) protein is Maturase K.